The chain runs to 428 residues: Serine--tRNA ligase (428 aa).

L-serine is bound at residue 235–237; sequence TAE. 266–268 contributes to the ATP binding site; that stretch reads RSE. L-serine is bound at residue Glu289. 353 to 356 contacts ATP; the sequence is EISS. Position 389 (Ser389) interacts with L-serine.

It belongs to the class-II aminoacyl-tRNA synthetase family. Type-1 seryl-tRNA synthetase subfamily. As to quaternary structure, homodimer. The tRNA molecule binds across the dimer.

The protein localises to the cytoplasm. It carries out the reaction tRNA(Ser) + L-serine + ATP = L-seryl-tRNA(Ser) + AMP + diphosphate + H(+). The catalysed reaction is tRNA(Sec) + L-serine + ATP = L-seryl-tRNA(Sec) + AMP + diphosphate + H(+). The protein operates within aminoacyl-tRNA biosynthesis; selenocysteinyl-tRNA(Sec) biosynthesis; L-seryl-tRNA(Sec) from L-serine and tRNA(Sec): step 1/1. Catalyzes the attachment of serine to tRNA(Ser). Is also able to aminoacylate tRNA(Sec) with serine, to form the misacylated tRNA L-seryl-tRNA(Sec), which will be further converted into selenocysteinyl-tRNA(Sec). This chain is Serine--tRNA ligase, found in Shewanella woodyi (strain ATCC 51908 / MS32).